A 582-amino-acid polypeptide reads, in one-letter code: Choline kinase (582 aa).

The segment at 1 to 36 (MVQESRPGSVRSYSVGYQARSRSSSQRRHSLTRQRS) is disordered. At serine 30 the chain carries Phosphoserine; by PKA. Phosphoserine is present on residues serine 48 and serine 51. Position 54 is a phosphothreonine (threonine 54). Residue serine 85 is modified to Phosphoserine; by PKA.

This sequence belongs to the choline/ethanolamine kinase family. Monomer. Interacts with NAP1. Mg(2+) is required as a cofactor.

The protein resides in the cytoplasm. The enzyme catalyses choline + ATP = phosphocholine + ADP + H(+). It carries out the reaction ethanolamine + ATP = phosphoethanolamine + ADP + H(+). It functions in the pathway phospholipid metabolism; phosphatidylcholine biosynthesis; phosphocholine from choline: step 1/1. Catalyzes the committed step in the synthesis of phosphatidylcholine by the CDP-choline pathway. Also exhibits ethanolamine kinase activity but it is a poor substrate at 14% efficiency compared with choline. The polypeptide is Choline kinase (Saccharomyces cerevisiae (strain ATCC 204508 / S288c) (Baker's yeast)).